We begin with the raw amino-acid sequence, 152 residues long: 3-hydroxyacyl-[acyl-carrier-protein] dehydratase FabZ (152 aa).

His-54 is a catalytic residue.

Belongs to the thioester dehydratase family. FabZ subfamily.

The protein resides in the cytoplasm. It carries out the reaction a (3R)-hydroxyacyl-[ACP] = a (2E)-enoyl-[ACP] + H2O. In terms of biological role, involved in unsaturated fatty acids biosynthesis. Catalyzes the dehydration of short chain beta-hydroxyacyl-ACPs and long chain saturated and unsaturated beta-hydroxyacyl-ACPs. The protein is 3-hydroxyacyl-[acyl-carrier-protein] dehydratase FabZ of Buchnera aphidicola subsp. Schizaphis graminum (strain Sg).